The chain runs to 526 residues: Phosphoenolpyruvate carboxylase (526 aa).

It belongs to the PEPCase type 2 family. As to quaternary structure, homotetramer. Mg(2+) is required as a cofactor.

It catalyses the reaction oxaloacetate + phosphate = phosphoenolpyruvate + hydrogencarbonate. Its function is as follows. Catalyzes the irreversible beta-carboxylation of phosphoenolpyruvate (PEP) to form oxaloacetate (OAA), a four-carbon dicarboxylic acid source for the tricarboxylic acid cycle. This chain is Phosphoenolpyruvate carboxylase, found in Methanosarcina barkeri (strain Fusaro / DSM 804).